The sequence spans 111 residues: Ribosome-binding factor A (111 aa).

The protein belongs to the RbfA family. As to quaternary structure, monomer. Binds 30S ribosomal subunits, but not 50S ribosomal subunits or 70S ribosomes.

The protein localises to the cytoplasm. In terms of biological role, one of several proteins that assist in the late maturation steps of the functional core of the 30S ribosomal subunit. Associates with free 30S ribosomal subunits (but not with 30S subunits that are part of 70S ribosomes or polysomes). Required for efficient processing of 16S rRNA. May interact with the 5'-terminal helix region of 16S rRNA. The chain is Ribosome-binding factor A from Helicobacter pylori (strain ATCC 700392 / 26695) (Campylobacter pylori).